Here is a 1049-residue protein sequence, read N- to C-terminus: Bifunctional cytochrome P450/NADPH--P450 reductase (1049 aa).

The segment at 2-472 is cytochrome P450; it reads TIKEMPQPKT…STEQSAKKVR (471 aa). A (9Z)-hexadecenoate-binding site is contributed by Y52. C401 is a binding site for heme. The interval 473-1049 is NADPH--P450 reductase; sequence KKAENAHNTP…GRYAKDVWAG (577 aa). Residues 483 to 622 enclose the Flavodoxin-like domain; the sequence is LLVLYGSNMG…TYEEWREHMW (140 aa). FMN is bound by residues 489–494, 536–539, 570–572, and 578–580; these read SNMGTA, SYNG, CGD, and TYQ. The 233-residue stretch at 660-892 folds into the FAD-binding FR-type domain; that stretch reads HGAFSTNVVA…STPQSEFTLP (233 aa).

In the N-terminal section; belongs to the cytochrome P450 family. FAD serves as cofactor. It depends on FMN as a cofactor. The cofactor is heme.

Its subcellular location is the cytoplasm. It catalyses the reaction 2 oxidized [cytochrome P450] + NADPH = 2 reduced [cytochrome P450] + NADP(+) + H(+). The enzyme catalyses an organic molecule + reduced [NADPH--hemoprotein reductase] + O2 = an alcohol + oxidized [NADPH--hemoprotein reductase] + H2O + H(+). Its activity is regulated as follows. Inhibited by N-(12-imidazolyl-dodecanoyl)-L-leucine. Functionally, functions as a fatty acid monooxygenase. Catalyzes hydroxylation of fatty acids at omega-1, omega-2 and omega-3 positions. Shows activity toward medium and long-chain fatty acids, with optimum chain lengths of 12, 14 and 16 carbons (lauric, myristic, and palmitic acids). Able to metabolize some of these primary metabolites to secondary and tertiary products. Marginal activity towards short chain lengths of 8-10 carbons. Hydroxylates highly branched fatty acids, which play an essential role in membrane fluidity regulation. Also displays a NADPH-dependent reductase activity in the C-terminal domain, which allows electron transfer from NADPH to the heme iron of the cytochrome P450 N-terminal domain. Involved in inactivation of quorum sensing signals of other competing bacteria by oxidazing efficiently acyl homoserine lactones (AHLs), molecules involved in quorum sensing signaling pathways, and their lactonolysis products acyl homoserines (AHs). The polypeptide is Bifunctional cytochrome P450/NADPH--P450 reductase (Priestia megaterium (strain ATCC 14581 / DSM 32 / CCUG 1817 / JCM 2506 / NBRC 15308 / NCIMB 9376 / NCTC 10342 / NRRL B-14308 / VKM B-512 / Ford 19) (Bacillus megaterium)).